The sequence spans 148 residues: SsrA-binding protein (148 aa).

The tract at residues 119-148 (AKGKKQHDKRQSMKEADWKREKQRLIKHTR) is disordered. The segment covering 127–142 (KRQSMKEADWKREKQR) has biased composition (basic and acidic residues).

This sequence belongs to the SmpB family.

The protein resides in the cytoplasm. In terms of biological role, required for rescue of stalled ribosomes mediated by trans-translation. Binds to transfer-messenger RNA (tmRNA), required for stable association of tmRNA with ribosomes. tmRNA and SmpB together mimic tRNA shape, replacing the anticodon stem-loop with SmpB. tmRNA is encoded by the ssrA gene; the 2 termini fold to resemble tRNA(Ala) and it encodes a 'tag peptide', a short internal open reading frame. During trans-translation Ala-aminoacylated tmRNA acts like a tRNA, entering the A-site of stalled ribosomes, displacing the stalled mRNA. The ribosome then switches to translate the ORF on the tmRNA; the nascent peptide is terminated with the 'tag peptide' encoded by the tmRNA and targeted for degradation. The ribosome is freed to recommence translation, which seems to be the essential function of trans-translation. This is SsrA-binding protein from Neisseria gonorrhoeae (strain ATCC 700825 / FA 1090).